The chain runs to 315 residues: Ribosomal RNA small subunit methyltransferase H (315 aa).

Residues 37–39, Asp-57, Phe-83, Asp-105, and Gln-112 each bind S-adenosyl-L-methionine; that span reads GGH.

Belongs to the methyltransferase superfamily. RsmH family.

It is found in the cytoplasm. The enzyme catalyses cytidine(1402) in 16S rRNA + S-adenosyl-L-methionine = N(4)-methylcytidine(1402) in 16S rRNA + S-adenosyl-L-homocysteine + H(+). Its function is as follows. Specifically methylates the N4 position of cytidine in position 1402 (C1402) of 16S rRNA. This chain is Ribosomal RNA small subunit methyltransferase H, found in Pseudomonas putida (strain GB-1).